A 236-amino-acid polypeptide reads, in one-letter code: Small ribosomal subunit protein uS2c (236 aa).

This sequence belongs to the universal ribosomal protein uS2 family.

It localises to the plastid. The protein resides in the chloroplast. The protein is Small ribosomal subunit protein uS2c (rps2) of Lotus japonicus (Lotus corniculatus var. japonicus).